We begin with the raw amino-acid sequence, 339 residues long: Transmembrane protein 120B (339 aa).

The stretch at 1-67 (MSGQLERCER…KHTLQRYKRH (67 aa)) forms a coiled coil. Transmembrane regions (helical) follow at residues 102-124 (GLYLNLVLGNVSVTLLSNQAKFA), 132-152 (FKLYLTIILLLGAVACRFVLH), 159-179 (VFNFLLVWYYCTLTIRESILI), 187-207 (GWWVSHHYVSTFLSGVMLTWP), 270-290 (FLLPFLFCGHFWQLYNAVTLF), and 302-322 (QVFVLALTFLILFLGNFLTTL).

Belongs to the TMEM120 family. As to quaternary structure, heterooligomer with TMEM120A. As to expression, expressed in inguinal and subcutaneous white adipose tissue and in brown adipose tissue.

It localises to the nucleus inner membrane. Necessary for efficient adipogenesis. Does not show ion channel activity. This chain is Transmembrane protein 120B, found in Mus musculus (Mouse).